The sequence spans 900 residues: Alpha-actinin-3 (900 aa).

Methionine 1 is subject to N-acetylmethionine. The segment at 1-26 is disordered; the sequence is MMMVMQPEGLGAGEGPFSGGGGGEYM. The tract at residues 1–260 is actin-binding; the sequence is MMMVMQPEGL…IMTYVSCFYH (260 aa). Gly residues predominate over residues 10–24; sequence LGAGEGPFSGGGGGE. Calponin-homology (CH) domains are found at residues 44–148 and 157–263; these read KQQR…LRFA and TSAK…HAFA. 4 Spectrin repeats span residues 287 to 397, 407 to 512, 522 to 633, and 643 to 746; these read KLME…WLLS, HLAE…ALER, QLQL…TLQE, and RLRR…EVEN. 2 EF-hand domains span residues 759 to 794 and 795 to 830; these read EQLNEFRASFNHFDRKRNGMMEPDDFRACLISMGYD and LGEVEFARIMTMVDPNAAGVVTFQAFIDFMTRETAE. Residues aspartate 772, asparagine 776, methionine 778, aspartate 783, aspartate 808, and asparagine 810 each coordinate Ca(2+).

This sequence belongs to the alpha-actinin family. In terms of assembly, homodimer; antiparallel. Also forms heterodimers with ACTN2. Interacts with MYOZ1. In terms of tissue distribution, expression restricted to skeletal muscle fast (type 2) fibers (at protein level).

F-actin cross-linking protein which is thought to anchor actin to a variety of intracellular structures. This is a bundling protein. The chain is Alpha-actinin-3 (Actn3) from Mus musculus (Mouse).